A 362-amino-acid chain; its full sequence is Peptide chain release factor 1 (362 aa).

Gln-235 is modified (N5-methylglutamine).

Belongs to the prokaryotic/mitochondrial release factor family. Methylated by PrmC. Methylation increases the termination efficiency of RF1.

Its subcellular location is the cytoplasm. Its function is as follows. Peptide chain release factor 1 directs the termination of translation in response to the peptide chain termination codons UAG and UAA. This chain is Peptide chain release factor 1, found in Acinetobacter baylyi (strain ATCC 33305 / BD413 / ADP1).